The primary structure comprises 245 residues: tRNA1(Val) (adenine(37)-N6)-methyltransferase (245 aa).

This sequence belongs to the methyltransferase superfamily. tRNA (adenine-N(6)-)-methyltransferase family.

The protein localises to the cytoplasm. The catalysed reaction is adenosine(37) in tRNA1(Val) + S-adenosyl-L-methionine = N(6)-methyladenosine(37) in tRNA1(Val) + S-adenosyl-L-homocysteine + H(+). Specifically methylates the adenine in position 37 of tRNA(1)(Val) (anticodon cmo5UAC). This chain is tRNA1(Val) (adenine(37)-N6)-methyltransferase, found in Escherichia coli O6:K15:H31 (strain 536 / UPEC).